The sequence spans 484 residues: Glucan endo-1,3-beta-glucosidase 5 (484 aa).

Residues 1-26 (MLFKGVFAVFFVITLLYASLLIEVEG) form the signal peptide. N-linked (GlcNAc...) asparagine glycosylation is present at Asn-102. Glu-122 acts as the Proton donor in catalysis. Residues Asn-129 and Asn-260 are each glycosylated (N-linked (GlcNAc...) asparagine). The active-site Nucleophile is Glu-267. A disulfide bridge links Cys-366 with Cys-428. N-linked (GlcNAc...) asparagine glycosylation occurs at Asn-409. The GPI-anchor amidated alanine moiety is linked to residue Ala-460. A propeptide spans 461-484 (SAMMPITRSTAVLLLLSICLYIVL) (removed in mature form).

It belongs to the glycosyl hydrolase 17 family. Contains two additional disulfide bonds.

The protein resides in the cell membrane. It catalyses the reaction Hydrolysis of (1-&gt;3)-beta-D-glucosidic linkages in (1-&gt;3)-beta-D-glucans.. The polypeptide is Glucan endo-1,3-beta-glucosidase 5 (Arabidopsis thaliana (Mouse-ear cress)).